We begin with the raw amino-acid sequence, 434 residues long: Tol-Pal system protein TolB (434 aa).

Positions 1 to 24 (MKFSAYLTTLFIVLFSLFIQTVQA) are cleaved as a signal peptide.

It belongs to the TolB family. The Tol-Pal system is composed of five core proteins: the inner membrane proteins TolA, TolQ and TolR, the periplasmic protein TolB and the outer membrane protein Pal. They form a network linking the inner and outer membranes and the peptidoglycan layer.

It localises to the periplasm. Functionally, part of the Tol-Pal system, which plays a role in outer membrane invagination during cell division and is important for maintaining outer membrane integrity. In Histophilus somni (strain 129Pt) (Haemophilus somnus), this protein is Tol-Pal system protein TolB.